The chain runs to 232 residues: Probable intron-encoded endonuclease aI3 (232 aa).

Belongs to the LAGLIDADG endonuclease family.

The protein localises to the mitochondrion. In terms of biological role, mitochondrial DNA endonuclease involved in intron homing. The polypeptide is Probable intron-encoded endonuclease aI3 (aI3) (Dictyostelium discoideum (Social amoeba)).